We begin with the raw amino-acid sequence, 361 residues long: Peptide chain release factor 1 (361 aa).

Gln-237 carries the post-translational modification N5-methylglutamine. The interval 286 to 306 (AKQDQEQAAKRKSLVGSGDRS) is disordered.

Belongs to the prokaryotic/mitochondrial release factor family. Post-translationally, methylated by PrmC. Methylation increases the termination efficiency of RF1.

It is found in the cytoplasm. Peptide chain release factor 1 directs the termination of translation in response to the peptide chain termination codons UAG and UAA. The chain is Peptide chain release factor 1 from Coxiella burnetii (strain CbuK_Q154) (Coxiella burnetii (strain Q154)).